We begin with the raw amino-acid sequence, 391 residues long: Tryptophan synthase beta chain (391 aa).

An N6-(pyridoxal phosphate)lysine modification is found at lysine 84.

It belongs to the TrpB family. As to quaternary structure, tetramer of two alpha and two beta chains. Pyridoxal 5'-phosphate is required as a cofactor.

The catalysed reaction is (1S,2R)-1-C-(indol-3-yl)glycerol 3-phosphate + L-serine = D-glyceraldehyde 3-phosphate + L-tryptophan + H2O. Its pathway is amino-acid biosynthesis; L-tryptophan biosynthesis; L-tryptophan from chorismate: step 5/5. Functionally, the beta subunit is responsible for the synthesis of L-tryptophan from indole and L-serine. This chain is Tryptophan synthase beta chain, found in Thermoanaerobacter sp. (strain X514).